The sequence spans 188 residues: MEIKLFGKWDSETVAVKDPSLKSYISVAPVLVPHTAGRNSKKSFDKSKMNIVERLANKLMANQNNTGKKHETLAIVEEALTIIENRTKENPVQVLVDALENSGPREETTRISYGGIAFLQSVDVSPSRRLDTAFRNIALGASESAHKNKKTVAQCLADELIFASKADMQKSFAVKKKEEKERVAQSAR.

This sequence belongs to the universal ribosomal protein uS7 family. Part of the 30S ribosomal subunit.

In terms of biological role, one of the primary rRNA binding proteins, it binds directly to 16S rRNA where it nucleates assembly of the head domain of the 30S subunit. Is located at the subunit interface close to the decoding center. In Methanococcus maripaludis (strain DSM 14266 / JCM 13030 / NBRC 101832 / S2 / LL), this protein is Small ribosomal subunit protein uS7.